The chain runs to 405 residues: CMP-sialic acid transporter 3 (405 aa).

Over 1 to 39 (MKNGIAECPACHSKLVSPGSKTISRAYDDHKIRVSSKQR) the chain is Cytoplasmic. The helical transmembrane segment at 40–60 (VLNVLLVVGDCMLVGLQPVLV) threads the bilayer. The Lumenal portion of the chain corresponds to 61–73 (YMSKVDGKFNFSP). A helical membrane pass occupies residues 74–94 (ISVNFLTEIAKVIFAIVMLLI). Topologically, residues 95–142 (QARHQKVGEKPLLSVSTFVQAARNNVLLAVPALLYAINNYLKFTMQLY) are cytoplasmic. A helical membrane pass occupies residues 143–163 (FNPATVKMLSNLKVLVIAVLL). At 164–170 (KMVMKRR) the chain is on the lumenal side. The chain crosses the membrane as a helical span at residues 171–191 (FSIIQWEALALLLIGISVNQL). At 192-199 (RSLPEGAT) the chain is on the cytoplasmic side. The helical transmembrane segment at 200 to 220 (AIGIPLATGAYVCTVIFVTVP) threads the bilayer. The Lumenal segment spans residues 221-243 (SMASVFNEYALKSQYDTSIYLQN). Residues 244 to 264 (LFLYGYGAIFNFLGILGTVIY) form a helical membrane-spanning segment. Residues 265–280 (KGPGSFDILQGHSRAT) are Cytoplasmic-facing. A helical membrane pass occupies residues 281 to 301 (MFLILNNAAQGILSSFFFKYA). At 302 to 321 (DTILKKYSSTVATIFTGIAS) the chain is on the lumenal side. The chain crosses the membrane as a helical span at residues 322 to 342 (AALFGHVITMNFLLGISIVFI). Residues 343 to 405 (SMHQFFSPLA…SDDRTPLLPR (63 aa)) are Cytoplasmic-facing. The tract at residues 385–405 (GANEEASHRGESDDRTPLLPR) is disordered. Basic and acidic residues predominate over residues 389-405 (EASHRGESDDRTPLLPR).

This sequence belongs to the nucleotide-sugar transporter family. CMP-Sialate:CMP antiporter (TC 2.A.7.12) subfamily.

The protein resides in the golgi apparatus membrane. Sugar transporter involved in the transport of CMP-sialic acid from the cytoplasm into the Golgi. This is CMP-sialic acid transporter 3 (UTR6) from Arabidopsis thaliana (Mouse-ear cress).